Here is a 217-residue protein sequence, read N- to C-terminus: MKRQSALVVFSGGQDSTTCLFWAMKHYEYVETVTFSYGQRHSQELEVAKEIAAEQGVKHHILDMSLLGQITENALTSDIAIETKDGEVPNTFVDGRNHLFLSFAAVLAKQRKIRDIVTGVCQTDFSGYPDCRDVFVKSLNVTLNLAMDYEFVIQTPLMWLDKAETWELADQLGKFDYVRQKTLTCYNGIRGTGCRQCPACHLRQAGLEKYLSQKGKN.

10–20 is a binding site for ATP; it reads FSGGQDSTTCL. Zn(2+) contacts are provided by Cys-185, Cys-194, Cys-197, and Cys-200.

This sequence belongs to the QueC family. In terms of assembly, homodimer. Zn(2+) is required as a cofactor.

The catalysed reaction is 7-carboxy-7-deazaguanine + NH4(+) + ATP = 7-cyano-7-deazaguanine + ADP + phosphate + H2O + H(+). It functions in the pathway purine metabolism; 7-cyano-7-deazaguanine biosynthesis. Functionally, catalyzes the ATP-dependent conversion of 7-carboxy-7-deazaguanine (CDG) to 7-cyano-7-deazaguanine (preQ(0)). This Streptococcus mutans serotype c (strain ATCC 700610 / UA159) protein is 7-cyano-7-deazaguanine synthase.